Here is a 476-residue protein sequence, read N- to C-terminus: Replication factor C large subunit (476 aa).

Residue 50 to 57 (GPPGVGKT) coordinates ATP. Residues 447-476 (YEKGTKKGKGEKRRKGSDEGSGLLKWLKKD) are disordered. Basic residues predominate over residues 452–461 (KKGKGEKRRK).

This sequence belongs to the activator 1 small subunits family. RfcL subfamily. As to quaternary structure, heteromultimer composed of small subunits (RfcS) and large subunits (RfcL).

Part of the RFC clamp loader complex which loads the PCNA sliding clamp onto DNA. This Ignicoccus hospitalis (strain KIN4/I / DSM 18386 / JCM 14125) protein is Replication factor C large subunit.